The primary structure comprises 550 residues: MFCVQCEQTIRTPAGNGCSYAQGMCGKTAETSDLQDLLIAALQGLSAWAVKAREYGIINHDVDSFAPRAFFSTLTNVNFDSPRIVGYAREAIALREALKAQCLAVDANARVDNPMADLQLVSDDLGELQRQAAEFTPNKDKAAIGENILGLRLLCLYGLKGAAAYMEHAHVLGQYDNDIYAQYHKIMAWLGTWPADMNALLECSMEIGQMNFKVMSILDAGETGKYGHPTPTQVNVKATAGKCILISGHDLKDLYNLLEQTEGTGVNVYTHGEMLPAHGYPELRKFKHLVGNYGSGWQNQQVEFARFPGPIVMTSNCIIDPTVSAYDDRIWTRSIVGWPGVRHLDGDDFSAVITQAQQMAGFPYSEIPHLITVGFGRQTLLGAADTLIDLVSREKLRHIFLLGGCDGARGERHYFTDFATIVPDDCLILTLACGKYRFNKLEFGDIEGLPRLVDAGQCNDAYSAIILAVTLAEKLGCGVNDLPLSLVLSWFEQKAIVILLTLLSLGVKNIVTGPTAPGFLTPDLLAVLNEKFGLRSITTVEEDMKQLLSA.

4 residues coordinate [2Fe-2S] cluster: Cys3, Cys6, Cys18, and Cys25. Positions 249, 273, 317, 405, 433, 458, 492, and 494 each coordinate hybrid [4Fe-2O-2S] cluster. Residue Cys405 is modified to Cysteine persulfide.

This sequence belongs to the HCP family. The cofactor is [2Fe-2S] cluster. Hybrid [4Fe-2O-2S] cluster serves as cofactor.

It is found in the cytoplasm. It catalyses the reaction A + NH4(+) + H2O = hydroxylamine + AH2 + H(+). Its function is as follows. Catalyzes the reduction of hydroxylamine to form NH(3) and H(2)O. The chain is Hydroxylamine reductase from Shigella boydii serotype 18 (strain CDC 3083-94 / BS512).